The following is a 366-amino-acid chain: 3-dehydroquinate synthase (366 aa).

Residues 75-80, 109-113, 133-134, Lys146, Lys155, and 173-176 each bind NAD(+); these read DGEQYK, GVIGD, TT, and CLST. Zn(2+) contacts are provided by Glu188, His251, and His268.

It belongs to the sugar phosphate cyclases superfamily. Dehydroquinate synthase family. The cofactor is Co(2+). Requires Zn(2+) as cofactor. NAD(+) is required as a cofactor.

It localises to the cytoplasm. It carries out the reaction 7-phospho-2-dehydro-3-deoxy-D-arabino-heptonate = 3-dehydroquinate + phosphate. Its pathway is metabolic intermediate biosynthesis; chorismate biosynthesis; chorismate from D-erythrose 4-phosphate and phosphoenolpyruvate: step 2/7. Functionally, catalyzes the conversion of 3-deoxy-D-arabino-heptulosonate 7-phosphate (DAHP) to dehydroquinate (DHQ). This chain is 3-dehydroquinate synthase, found in Vibrio campbellii (strain ATCC BAA-1116).